The chain runs to 166 residues: Putative 4-hydroxy-4-methyl-2-oxoglutarate aldolase 2 (166 aa).

A2 bears the N-acetylalanine mark. Residues 81–84 (GGNP) and R103 each bind substrate. D104 is an a divalent metal cation binding site.

This sequence belongs to the class II aldolase/RraA-like family. Homotrimer. A divalent metal cation serves as cofactor.

The enzyme catalyses 4-hydroxy-4-methyl-2-oxoglutarate = 2 pyruvate. It catalyses the reaction oxaloacetate + H(+) = pyruvate + CO2. Catalyzes the aldol cleavage of 4-hydroxy-4-methyl-2-oxoglutarate (HMG) into 2 molecules of pyruvate. Also contains a secondary oxaloacetate (OAA) decarboxylase activity due to the common pyruvate enolate transition state formed following C-C bond cleavage in the retro-aldol and decarboxylation reactions. This is Putative 4-hydroxy-4-methyl-2-oxoglutarate aldolase 2 from Arabidopsis thaliana (Mouse-ear cress).